Here is a 334-residue protein sequence, read N- to C-terminus: Probable prephenate dehydratase (334 aa).

In terms of domain architecture, Prephenate dehydratase spans 7-224 (RVLFLGPKGT…NTTRFLVLKR (218 aa)). In terms of domain architecture, ACT spans 244-322 (LTFTTRQDDP…SDKSKQWCLW (79 aa)).

It localises to the cytoplasm. The catalysed reaction is prephenate + H(+) = 3-phenylpyruvate + CO2 + H2O. The protein operates within amino-acid biosynthesis; L-phenylalanine biosynthesis; phenylpyruvate from prephenate: step 1/1. Catayzes the decarboxylation/dehydration of prephenate to phenylpyruvate. The protein is Probable prephenate dehydratase (PHA2) of Saccharomyces cerevisiae (strain ATCC 204508 / S288c) (Baker's yeast).